The primary structure comprises 327 residues: MAKPIRVLLYYKYVPIENAEQFAADHLAFCKSIGLKGRILVADEGINGTVSGDYETTQKYMDYVHSLPGMEDLWFKIDEEEEQAFKKMFVRYKKEIVHLGLEDNNFDSDINPLETTGAYLSPKEFKDALLDEDTVVLDTRNDYEYDLGHFRGAIRPDIRNFRELPQWVRDHKEEFMDKRVVVYCTGGVRCEKFSGWLVREGYKDVGQLHGGIVTYGKDPEVQGELWDGKLYVFDERIAVDVNHVDPIVVGKDWFDGTPCERYVNCGNPFCNRRILTSEENEDKYLRGCSHECRVHPRNRYVSENDLSQEEVVERLAAIGESLDVTPA.

In terms of domain architecture, Rhodanese spans 130–224 (LDEDTVVLDT…YGKDPEVQGE (95 aa)). Cys-184 (cysteine persulfide intermediate) is an active-site residue.

Belongs to the TrhO family.

It carries out the reaction uridine(34) in tRNA + AH2 + O2 = 5-hydroxyuridine(34) in tRNA + A + H2O. Functionally, catalyzes oxygen-dependent 5-hydroxyuridine (ho5U) modification at position 34 in tRNAs. The protein is tRNA uridine(34) hydroxylase of Streptococcus thermophilus (strain CNRZ 1066).